The sequence spans 552 residues: Tyrosine-protein kinase Src64B (552 aa).

The SH3 domain occupies 95–156 (VLKRVVVALY…PLNFVAEERS (62 aa)). Residues 162–259 (WFFENVLRKE…GLCHILSRPC (98 aa)) enclose the SH2 domain. Residues 284–537 (IQLLRKLGRG…TFEFLNHYFE (254 aa)) form the Protein kinase domain. ATP contacts are provided by residues 290–298 (LGRGNFGEV) and lysine 312. Aspartate 404 acts as the Proton acceptor in catalysis. Tyrosine 434 carries the phosphotyrosine; by autocatalysis modification.

This sequence belongs to the protein kinase superfamily. Tyr protein kinase family. SRC subfamily. Interacts with hzg. In terms of processing, phosphorylated. As to expression, after the first 8 hours of development, accumulates almost exclusively in neural tissues such as the brain, ventral nerve chord, and eye-antennal disks, and in differentiating smooth muscle.

It catalyses the reaction L-tyrosyl-[protein] + ATP = O-phospho-L-tyrosyl-[protein] + ADP + H(+). Its function is as follows. Tyrosine-protein kinase that may play a role in the development of neural tissue and smooth muscle. May contribute to tyrosine phosphorylation of Dscam1, a cell surface receptor involved in targeting of growing axons during eye morphogenesis. In Drosophila melanogaster (Fruit fly), this protein is Tyrosine-protein kinase Src64B (Src64B).